Here is a 481-residue protein sequence, read N- to C-terminus: Vanillin dehydrogenase (481 aa).

Residue 228–233 coordinates NAD(+); the sequence is GSTHVG. Catalysis depends on residues glutamate 250 and cysteine 284.

It belongs to the aldehyde dehydrogenase family.

The enzyme catalyses vanillin + NAD(+) + H2O = vanillate + NADH + 2 H(+). Catalyzes the NAD-dependent oxidation of vanillin to vanillic acid. The polypeptide is Vanillin dehydrogenase (vdh) (Pseudomonas sp. (strain HR199 / DSM 7063)).